The primary structure comprises 318 residues: Taste receptor type 2 member 60 (318 aa).

The Extracellular segment spans residues 1–7 (MNGDHMV). A helical transmembrane segment spans residues 8–28 (LGSSVTDQKAIILVIILLLLC). The Cytoplasmic portion of the chain corresponds to 29–40 (LVAIAGNGFITA). The helical transmembrane segment at 41–61 (ALGVEWVLRGTLLPCDKLLVS) threads the bilayer. At 62-88 (LRASRFCLQWVVMGKTIYVLLYPTAFP) the chain is on the extracellular side. The helical transmembrane segment at 89-109 (YNPVLQFLAFQWDFLNAATLW) threads the bilayer. The Cytoplasmic segment spans residues 110–128 (FSSWLSVFYCVKIATFTHP). The chain crosses the membrane as a helical span at residues 129–149 (VFLWLKHKLSEWVPWMFFSSV). Residues 150 to 183 (GLSSFTTILFFIGNHSIYQNYLRNHLQPWNVTGN) are Extracellular-facing. Residues Asn163 and Asn179 are each glycosylated (N-linked (GlcNAc...) asparagine). A helical membrane pass occupies residues 184–204 (SIWSYCEKFYLFPVKMITWTM). At 205–234 (PTAVFFICMILLITSLGRHMEKALLTTSGF) the chain is on the cytoplasmic side. Residues 235-255 (REPSVQAHVKALLALLSLAML) form a helical membrane-spanning segment. The Extracellular portion of the chain corresponds to 256–264 (FISYFLSLV). A helical transmembrane segment spans residues 265-285 (LSAAGIFPPLDFKFWVGESVI). Residues 286–318 (YLCAGVHPIILLFSNRRLRAVLERCRSSRCRTP) are Cytoplasmic-facing.

This sequence belongs to the G-protein coupled receptor T2R family.

It localises to the membrane. In terms of biological role, receptor that may play a role in the perception of bitterness and is gustducin-linked. May play a role in sensing the chemical composition of the gastrointestinal content. The activity of this receptor may stimulate alpha gustducin, mediate PLC-beta-2 activation and lead to the gating of TRPM5. The polypeptide is Taste receptor type 2 member 60 (TAS2R60) (Macaca mulatta (Rhesus macaque)).